Consider the following 243-residue polypeptide: Carboxy-S-adenosyl-L-methionine synthase (243 aa).

Residues Tyr-39, 64 to 66 (GCS), 89 to 90 (DN), 117 to 118 (DL), Asn-132, and Arg-199 contribute to the S-adenosyl-L-methionine site.

The protein belongs to the class I-like SAM-binding methyltransferase superfamily. Cx-SAM synthase family. Homodimer.

It catalyses the reaction prephenate + S-adenosyl-L-methionine = carboxy-S-adenosyl-L-methionine + 3-phenylpyruvate + H2O. Its function is as follows. Catalyzes the conversion of S-adenosyl-L-methionine (SAM) to carboxy-S-adenosyl-L-methionine (Cx-SAM). The polypeptide is Carboxy-S-adenosyl-L-methionine synthase (Pseudoalteromonas atlantica (strain T6c / ATCC BAA-1087)).